A 178-amino-acid polypeptide reads, in one-letter code: Large ribosomal subunit protein bL25 (178 aa).

Belongs to the bacterial ribosomal protein bL25 family. CTC subfamily. In terms of assembly, part of the 50S ribosomal subunit; part of the 5S rRNA/L5/L18/L25 subcomplex. Contacts the 5S rRNA. Binds to the 5S rRNA independently of L5 and L18.

Functionally, this is one of the proteins that binds to the 5S RNA in the ribosome where it forms part of the central protuberance. The sequence is that of Large ribosomal subunit protein bL25 from Helicobacter hepaticus (strain ATCC 51449 / 3B1).